A 232-amino-acid polypeptide reads, in one-letter code: Ubiquinone biosynthesis O-methyltransferase (232 aa).

R36, G55, D76, and M120 together coordinate S-adenosyl-L-methionine.

The protein belongs to the methyltransferase superfamily. UbiG/COQ3 family.

The catalysed reaction is a 3-demethylubiquinol + S-adenosyl-L-methionine = a ubiquinol + S-adenosyl-L-homocysteine + H(+). It catalyses the reaction a 3-(all-trans-polyprenyl)benzene-1,2-diol + S-adenosyl-L-methionine = a 2-methoxy-6-(all-trans-polyprenyl)phenol + S-adenosyl-L-homocysteine + H(+). Its pathway is cofactor biosynthesis; ubiquinone biosynthesis. O-methyltransferase that catalyzes the 2 O-methylation steps in the ubiquinone biosynthetic pathway. This chain is Ubiquinone biosynthesis O-methyltransferase, found in Burkholderia mallei (strain ATCC 23344).